We begin with the raw amino-acid sequence, 326 residues long: Diphthine methyltransferase (326 aa).

4 WD repeats span residues 65–105, 113–152, 155–195, and 293–326; these read MHCD…ELMF, DSSV…IKNK, EHDY…SCIW, and EHES…WEDI.

The protein belongs to the DPH7 family.

The protein localises to the cytoplasm. It is found in the nucleus. The enzyme catalyses diphthine methyl ester-[translation elongation factor 2] + H2O = diphthine-[translation elongation factor 2] + methanol + H(+). It participates in protein modification; peptidyl-diphthamide biosynthesis. Catalyzes the demethylation of diphthine methyl ester to form diphthine, an intermediate in diphthamide biosynthesis, a post-translational modification of histidine which occurs in translation elongation factor 2 (eft201 and eft202). This chain is Diphthine methyltransferase (rrt2), found in Schizosaccharomyces pombe (strain 972 / ATCC 24843) (Fission yeast).